Consider the following 338-residue polypeptide: RNA 3'-terminal phosphate cyclase (338 aa).

Residues Gln-103 and 283-287 each bind ATP; that span reads YLADQ. The active-site Tele-AMP-histidine intermediate is the His-308.

The protein belongs to the RNA 3'-terminal cyclase family. Type 1 subfamily.

It is found in the cytoplasm. It catalyses the reaction a 3'-end 3'-phospho-ribonucleotide-RNA + ATP = a 3'-end 2',3'-cyclophospho-ribonucleotide-RNA + AMP + diphosphate. Catalyzes the conversion of 3'-phosphate to a 2',3'-cyclic phosphodiester at the end of RNA. The mechanism of action of the enzyme occurs in 3 steps: (A) adenylation of the enzyme by ATP; (B) transfer of adenylate to an RNA-N3'P to produce RNA-N3'PP5'A; (C) and attack of the adjacent 2'-hydroxyl on the 3'-phosphorus in the diester linkage to produce the cyclic end product. The biological role of this enzyme is unknown but it is likely to function in some aspects of cellular RNA processing. This is RNA 3'-terminal phosphate cyclase from Escherichia coli O45:K1 (strain S88 / ExPEC).